A 23-amino-acid chain; its full sequence is Paralytic peptide 1 (23 aa).

Cys-7 and Cys-19 form a disulfide bridge.

It belongs to the GBP/PSP1/paralytic peptide family. Hemolymph.

In terms of biological role, causes rapid, rigid paralysis when injected into Lepidopteran larvae. The physiological role may be to reduce hemolymph loss following injury and promote wound healing. The polypeptide is Paralytic peptide 1 (Heliothis virescens (Tobacco budworm moth)).